The sequence spans 181 residues: Large ribosomal subunit protein eL18 (181 aa).

Belongs to the eukaryotic ribosomal protein eL18 family.

The protein localises to the cytoplasm. The chain is Large ribosomal subunit protein eL18 (rpl18) from Dictyostelium discoideum (Social amoeba).